A 251-amino-acid chain; its full sequence is Probable transcriptional regulatory protein CT1665 (251 aa).

Belongs to the TACO1 family.

It localises to the cytoplasm. This chain is Probable transcriptional regulatory protein CT1665, found in Chlorobaculum tepidum (strain ATCC 49652 / DSM 12025 / NBRC 103806 / TLS) (Chlorobium tepidum).